The following is a 385-amino-acid chain: MKKILAICGIELSLIFKKPQNYLIMFAAPLLLTFVFGSMLSGNDDKVRLAIVDQDDTILSQHYIRQLKAHDDMYVFENMSESKASEKLKQKKIAGIIVISRSFQTQLEKGKHPELIFRHGPELSEAPMVKQYAESALATLNIQVTAAKTASQTAGENWKAAYKTVFAKKHEDIVPAVTRQTLSDKKEGAEASDTASRAAGFSILFVMLTMMGAAGTILEARKNGVWSRLLTASVSRAEIGAGYVLSFFVIGWIQFGILLLSTHWLFGINWGNPAAVIVLVSLFLLTVVGIGLMIAANVRTPEQQLAFGNLFVIATCMVSGMYWPIDIEPKFMQSIAEFLPQKWAMSGLTEIIANGARVTDILGICGILLAFAAITFAAGLKALRA.

Helical transmembrane passes span 22–42, 198–218, 239–259, 274–294, 305–325, and 360–380; these read YLIMFAAPLLLTFVFGSMLSG, AAGFSILFVMLTMMGAAGTIL, IGAGYVLSFFVIGWIQFGILL, AAVIVLVSLFLLTVVGIGLMI, LAFGNLFVIATCMVSGMYWPI, and DILGICGILLAFAAITFAAGL. An ABC transmembrane type-2 domain is found at 163–382; sequence KTVFAKKHED…AITFAAGLKA (220 aa).

Belongs to the ABC-2 integral membrane protein family. In terms of assembly, the complex is composed of two ATP-binding proteins (LnrL) and two transmembrane proteins (LnrM and LnrN).

It localises to the cell membrane. Its function is as follows. Required for resistance to linearmycins, a family of antibiotic-specialized metabolites produced by some streptomycetes. Part of the ABC transporter complex LnrLMN that probably facilitates linearmycin removal from the membrane. Responsible for the translocation of the substrate across the membrane. Also mediates KinC-dependent biofilm morphology. This chain is Linearmycin resistance permease protein LnrN, found in Bacillus subtilis (strain 168).